Reading from the N-terminus, the 325-residue chain is Large ribosomal subunit protein uL1m (325 aa).

A mitochondrion-targeting transit peptide spans 1 to 50; the sequence is MAAAVRCMGRALIHHQRHSLSKMVYQTSLCSCSVNIRVPNRHFAAATKSA.

This sequence belongs to the universal ribosomal protein uL1 family. As to quaternary structure, component of the mitochondrial large ribosomal subunit (mt-LSU). Mature mammalian 55S mitochondrial ribosomes consist of a small (28S) and a large (39S) subunit. The 28S small subunit contains a 12S ribosomal RNA (12S mt-rRNA) and 30 different proteins. The 39S large subunit contains a 16S rRNA (16S mt-rRNA), a copy of mitochondrial valine transfer RNA (mt-tRNA(Val)), which plays an integral structural role, and 52 different proteins.

It localises to the mitochondrion. The chain is Large ribosomal subunit protein uL1m (MRPL1) from Homo sapiens (Human).